We begin with the raw amino-acid sequence, 260 residues long: Phytolongin Phyl2.1 (260 aa).

Positions 12-114 (CIAKGTVILA…LDNPTQHCLQ (103 aa)) constitute a Longin domain. Residues 231–251 (WIVLMFDLCICLVLFGIWLWI) traverse the membrane as a helical; Anchor for type IV membrane protein segment.

Belongs to the synaptobrevin family.

It is found in the membrane. Non-SNARE longin protein involved in membrane-trafficking machinery. This Arabidopsis thaliana (Mouse-ear cress) protein is Phytolongin Phyl2.1.